The chain runs to 485 residues: MSGGLFIDGKWRAGQGAGLSSTDPATGEDVWSAATATPADVADAVAAARKAFPAWADRPREERIAILRRYKDILVERAAPYAEALSRETGKALWETRAELASMAGKVDLSIRAYDERTGVTENAMPFGRAVLRHRAHGVMAVLGPFNFPGHLPNGHIVPALLAGDTVVFKPSEETPLAGQLMVEALEAAGAPAGVVNLVQGGRETGQALIAQDIDGLLFTGSAAAGTYFRRYFADRPDVILALELGGNNPLVVWNADDAPEAVAALIVQSAFITTGQRCSCARRLIVPDDASGAAIIEATVALAERLVIGAWNAENEPFMGPLISGRAAKAAREVASATPGKTILALDGVAGLGDAFLKPGIVDVTGLETPDEELFAPLLQVRRVSSFDEALAAANATRYGLSAGLISNESELWDKFLSRIRAGVVNWNRPTTGAAGSMPFGGLGASGNHRPSAYYAADYCAYPVASFEASMVVDTLKDIKGLKA.

221-226 serves as a coordination point for NAD(+); that stretch reads GSAAAG. Active-site residues include E244 and C279.

Belongs to the aldehyde dehydrogenase family. AstD subfamily.

It catalyses the reaction N-succinyl-L-glutamate 5-semialdehyde + NAD(+) + H2O = N-succinyl-L-glutamate + NADH + 2 H(+). The protein operates within amino-acid degradation; L-arginine degradation via AST pathway; L-glutamate and succinate from L-arginine: step 4/5. Functionally, catalyzes the NAD-dependent reduction of succinylglutamate semialdehyde into succinylglutamate. This is N-succinylglutamate 5-semialdehyde dehydrogenase 2 from Caulobacter vibrioides (strain ATCC 19089 / CIP 103742 / CB 15) (Caulobacter crescentus).